The sequence spans 184 residues: ATP synthase subunit b, chloroplastic (184 aa).

Residues 27–49 (LATNPINLSVVFGVLIFFGKGVL) traverse the membrane as a helical segment.

This sequence belongs to the ATPase B chain family. In terms of assembly, F-type ATPases have 2 components, F(1) - the catalytic core - and F(0) - the membrane proton channel. F(1) has five subunits: alpha(3), beta(3), gamma(1), delta(1), epsilon(1). F(0) has four main subunits: a(1), b(1), b'(1) and c(10-14). The alpha and beta chains form an alternating ring which encloses part of the gamma chain. F(1) is attached to F(0) by a central stalk formed by the gamma and epsilon chains, while a peripheral stalk is formed by the delta, b and b' chains.

Its subcellular location is the plastid. The protein resides in the chloroplast thylakoid membrane. F(1)F(0) ATP synthase produces ATP from ADP in the presence of a proton or sodium gradient. F-type ATPases consist of two structural domains, F(1) containing the extramembraneous catalytic core and F(0) containing the membrane proton channel, linked together by a central stalk and a peripheral stalk. During catalysis, ATP synthesis in the catalytic domain of F(1) is coupled via a rotary mechanism of the central stalk subunits to proton translocation. In terms of biological role, component of the F(0) channel, it forms part of the peripheral stalk, linking F(1) to F(0). This Barbarea verna (Land cress) protein is ATP synthase subunit b, chloroplastic.